Reading from the N-terminus, the 179-residue chain is Large ribosomal subunit protein uL16 (179 aa).

The disordered stretch occupies residues 147–179 (KASSASLANLDEDANSQTDDETSSSGSVATVES). Over residues 156–168 (LDEDANSQTDDET) the composition is skewed to acidic residues. Polar residues predominate over residues 169–179 (SSSGSVATVES).

This sequence belongs to the universal ribosomal protein uL16 family. As to quaternary structure, part of the 50S ribosomal subunit.

Binds 23S rRNA and is also seen to make contacts with the A and possibly P site tRNAs. This Prochlorococcus marinus (strain MIT 9211) protein is Large ribosomal subunit protein uL16.